Consider the following 961-residue polypeptide: Glycine dehydrogenase (decarboxylating) (961 aa).

Lys-702 carries the post-translational modification N6-(pyridoxal phosphate)lysine.

This sequence belongs to the GcvP family. The glycine cleavage system is composed of four proteins: P, T, L and H. Requires pyridoxal 5'-phosphate as cofactor.

The enzyme catalyses N(6)-[(R)-lipoyl]-L-lysyl-[glycine-cleavage complex H protein] + glycine + H(+) = N(6)-[(R)-S(8)-aminomethyldihydrolipoyl]-L-lysyl-[glycine-cleavage complex H protein] + CO2. In terms of biological role, the glycine cleavage system catalyzes the degradation of glycine. The P protein binds the alpha-amino group of glycine through its pyridoxal phosphate cofactor; CO(2) is released and the remaining methylamine moiety is then transferred to the lipoamide cofactor of the H protein. The chain is Glycine dehydrogenase (decarboxylating) from Rhodopseudomonas palustris (strain BisA53).